We begin with the raw amino-acid sequence, 986 residues long: Replication factor C subunit 1 (986 aa).

Residues 1 to 95 (MQRGIDSFFK…ALSKLKRHVD (95 aa)) are disordered. Phosphoserine is present on residues S18, S28, S40, S41, S48, and S58. The residue at position 60 (T60) is a Phosphothreonine. Residues S62 and S63 each carry the phosphoserine modification. T71 is subject to Phosphothreonine. 7 positions are modified to phosphoserine: S128, S137, S149, S154, S156, S164, and S194. Positions 136 to 147 (ESIKEAAPEKKV) are enriched in basic and acidic residues. Disordered regions lie at residues 136–203 (ESIK…ERHE) and 317–388 (KQVK…NDVP). T197 bears the Phosphothreonine mark. The BRCT domain occupies 232-322 (GSPDCLSGLT…SGIAKQVKEE (91 aa)). 2 stretches are compositionally biased toward basic and acidic residues: residues 317-364 (KQVK…EKHD) and 370-385 (VKEEHTSPKETKDKLN). ATP is bound at residue 487-494 (GPPGIGKT). A disordered region spans residues 913-986 (SEAAGADDDY…ASKSKAKAKK (74 aa)). Residues 917-932 (GADDDYLDEGPGEEDG) show a composition bias toward acidic residues. Residues S938 and S939 each carry the phosphoserine modification. The Nuclear localization signal motif lies at 955 to 959 (KAKKR). Residues 962–979 (TSKASGGSKKATSSTASK) are compositionally biased toward low complexity.

It belongs to the activator 1 large subunit family. Interacts with C-terminus of PCNA.

The protein localises to the nucleus. Its function is as follows. The elongation of primed DNA templates by DNA polymerase delta and epsilon requires the action of the accessory proteins proliferating cell nuclear antigen (PCNA) and activator 1. This subunit binds to the primer-template junction. The protein is Replication factor C subunit 1 (Gnf1) of Drosophila melanogaster (Fruit fly).